Here is a 614-residue protein sequence, read N- to C-terminus: DNA mismatch repair protein MutL (614 aa).

This sequence belongs to the DNA mismatch repair MutL/HexB family.

In terms of biological role, this protein is involved in the repair of mismatches in DNA. It is required for dam-dependent methyl-directed DNA mismatch repair. May act as a 'molecular matchmaker', a protein that promotes the formation of a stable complex between two or more DNA-binding proteins in an ATP-dependent manner without itself being part of a final effector complex. The polypeptide is DNA mismatch repair protein MutL (Thermoanaerobacter sp. (strain X514)).